The sequence spans 241 residues: Pyridoxine 5'-phosphate synthase (241 aa).

N7 is a 3-amino-2-oxopropyl phosphate binding site. 9–10 (DH) provides a ligand contact to 1-deoxy-D-xylulose 5-phosphate. A 3-amino-2-oxopropyl phosphate-binding site is contributed by R18. H43 functions as the Proton acceptor in the catalytic mechanism. 2 residues coordinate 1-deoxy-D-xylulose 5-phosphate: R45 and H50. E70 (proton acceptor) is an active-site residue. Position 100 (T100) interacts with 1-deoxy-D-xylulose 5-phosphate. Residue H191 is the Proton donor of the active site. Residues G192 and 213–214 (GH) contribute to the 3-amino-2-oxopropyl phosphate site.

This sequence belongs to the PNP synthase family. In terms of assembly, homooctamer; tetramer of dimers.

The protein localises to the cytoplasm. The enzyme catalyses 3-amino-2-oxopropyl phosphate + 1-deoxy-D-xylulose 5-phosphate = pyridoxine 5'-phosphate + phosphate + 2 H2O + H(+). It functions in the pathway cofactor biosynthesis; pyridoxine 5'-phosphate biosynthesis; pyridoxine 5'-phosphate from D-erythrose 4-phosphate: step 5/5. Catalyzes the complicated ring closure reaction between the two acyclic compounds 1-deoxy-D-xylulose-5-phosphate (DXP) and 3-amino-2-oxopropyl phosphate (1-amino-acetone-3-phosphate or AAP) to form pyridoxine 5'-phosphate (PNP) and inorganic phosphate. The polypeptide is Pyridoxine 5'-phosphate synthase (Nitrosospira multiformis (strain ATCC 25196 / NCIMB 11849 / C 71)).